Consider the following 1574-residue polypeptide: Synaptojanin-1 (1574 aa).

Residues 119-442 enclose the SAC domain; it reads VRKVLNSGNF…GDSISKIYAG (324 aa). The tract at residues 500 to 899 is catalytic; the sequence is GSLRVSEQTL…GPPDGTVLVS (400 aa). 2 positions are modified to phosphoserine: serine 820 and serine 830. The RRM domain occupies 894 to 971; sequence GTVLVSIKSS…RTITITLKSP (78 aa). Positions 1029–1054 are enriched in low complexity; the sequence is HLQPSSSSGLGTSPSSSPRTSPCQSP. The disordered stretch occupies residues 1029-1327; the sequence is HLQPSSSSGL…GVKQEPTLKS (299 aa). Serine 1053 bears the Phosphoserine mark. Residues 1090–1100 are compositionally biased toward polar residues; the sequence is PAAQKESSQTI. The span at 1105 to 1127 shows a compositional bias: pro residues; the sequence is PPPPRPVAPPARPAPPQRPPPPS. Residues serine 1147 and serine 1175 each carry the phosphoserine modification. At arginine 1198 the chain carries Omega-N-methylarginine. Threonine 1217 is modified (phosphothreonine). A compositionally biased stretch (low complexity) spans 1287–1310; that stretch reads SRSSQSLPSDSSPQLQQEQPTGQQ. Serine 1289 and serine 1350 each carry phosphoserine. Threonine 1354 carries the post-translational modification Phosphothreonine. Disordered stretches follow at residues 1382 to 1519 and 1532 to 1574; these read TMPP…SFDD and LPAR…FTER. Residues 1389 to 1413 show a composition bias toward polar residues; it reads QSKSQESVGSSANPFPSLPTRNPFT. Tandem repeats lie at residues 1401–1403, 1410–1412, and 1421–1423. A 3 X 3 AA repeats of N-P-F region spans residues 1401 to 1423; that stretch reads NPFPSLPTRNPFTDRTAAPGNPF. 2 stretches are compositionally biased toward polar residues: residues 1424–1436 and 1472–1484; these read RVQS…TSWL and DLQS…TSNP. Residues 1535–1548 show a composition bias toward pro residues; the sequence is RRPPPPPPPVPLLP. Over residues 1549–1563 the composition is skewed to low complexity; the sequence is PGTTSSAGPSTTLSS. A Phosphoserine modification is found at serine 1566.

It belongs to the synaptojanin family. This sequence in the central section; belongs to the inositol 1,4,5-trisphosphate 5-phosphatase family. As to quaternary structure, interacts with ASH/GRB2. Interacts with PACSIN1, PACSIN2 and PACSIN3. Interacts with AMPH, SH3GL1, SH3GL2 and SH3GL3. Interacts with MYO1E (via SH3 domain). Interacts with BIN1 and DNM1. Interacts with EPS15. As to expression, found in neonatal brain, and in a wide variety of adult non-neuronal tissues. Concentrated at clathrin-coated endocytic intermediates in nerve terminals. Also detected in the lung and heart. Expressed at higher levels than isoform 2 in the testis and liver and is not detected in the skeletal muscle. In terms of tissue distribution, expressed predominantly in the neurons, but is also found in all other tissues at much lower levels. Also detected in the lung and heart. Epressed at lower levels than isoform 1 in the testis and liver and is not detected in the skeletal muscle. Expressed in the brain.

The protein resides in the membrane. Its subcellular location is the cytoplasm. It is found in the perinuclear region. It carries out the reaction a 1,2-diacyl-sn-glycero-3-phospho-(1D-myo-inositol-4,5-bisphosphate) + H2O = a 1,2-diacyl-sn-glycero-3-phospho-(1D-myo-inositol 4-phosphate) + phosphate. Functionally, phosphatase that acts on various phosphoinositides, including phosphatidylinositol 4-phosphate, phosphatidylinositol (4,5)-bisphosphate and phosphatidylinositol (3,4,5)-trisphosphate. Has a role in clathrin-mediated endocytosis. Hydrolyzes PIP2 bound to actin regulatory proteins resulting in the rearrangement of actin filaments downstream of tyrosine kinase and ASH/GRB2. The sequence is that of Synaptojanin-1 (Synj1) from Rattus norvegicus (Rat).